We begin with the raw amino-acid sequence, 158 residues long: NAD(P)H-quinone oxidoreductase subunit J, chloroplastic (158 aa).

This sequence belongs to the complex I 30 kDa subunit family. As to quaternary structure, NDH is composed of at least 16 different subunits, 5 of which are encoded in the nucleus.

The protein resides in the plastid. The protein localises to the chloroplast thylakoid membrane. It catalyses the reaction a plastoquinone + NADH + (n+1) H(+)(in) = a plastoquinol + NAD(+) + n H(+)(out). It carries out the reaction a plastoquinone + NADPH + (n+1) H(+)(in) = a plastoquinol + NADP(+) + n H(+)(out). NDH shuttles electrons from NAD(P)H:plastoquinone, via FMN and iron-sulfur (Fe-S) centers, to quinones in the photosynthetic chain and possibly in a chloroplast respiratory chain. The immediate electron acceptor for the enzyme in this species is believed to be plastoquinone. Couples the redox reaction to proton translocation, and thus conserves the redox energy in a proton gradient. The chain is NAD(P)H-quinone oxidoreductase subunit J, chloroplastic from Aethionema grandiflorum (Persian stone-cress).